A 152-amino-acid chain; its full sequence is Transcriptional regulator MraZ (152 aa).

2 consecutive SpoVT-AbrB domains span residues 5–52 (ASAI…PLDE) and 81–124 (AHEC…DEAA).

It belongs to the MraZ family. As to quaternary structure, forms oligomers.

It localises to the cytoplasm. It is found in the nucleoid. The sequence is that of Transcriptional regulator MraZ from Shewanella violacea (strain JCM 10179 / CIP 106290 / LMG 19151 / DSS12).